A 150-amino-acid polypeptide reads, in one-letter code: Flagellar assembly factor FliW (150 aa).

This sequence belongs to the FliW family. Interacts with translational regulator CsrA and flagellin(s).

It is found in the cytoplasm. Its function is as follows. Acts as an anti-CsrA protein, binds CsrA and prevents it from repressing translation of its target genes, one of which is flagellin. Binds to flagellin and participates in the assembly of the flagellum. The protein is Flagellar assembly factor FliW of Caldanaerobacter subterraneus subsp. tengcongensis (strain DSM 15242 / JCM 11007 / NBRC 100824 / MB4) (Thermoanaerobacter tengcongensis).